The sequence spans 423 residues: UDP-N-acetylglucosamine 1-carboxyvinyltransferase (423 aa).

22–23 (KN) is a binding site for phosphoenolpyruvate. Arg93 contributes to the UDP-N-acetyl-alpha-D-glucosamine binding site. Cys117 (proton donor) is an active-site residue. Cys117 is modified (2-(S-cysteinyl)pyruvic acid O-phosphothioketal). UDP-N-acetyl-alpha-D-glucosamine contacts are provided by Asp305 and Ile327.

This sequence belongs to the EPSP synthase family. MurA subfamily.

It localises to the cytoplasm. It catalyses the reaction phosphoenolpyruvate + UDP-N-acetyl-alpha-D-glucosamine = UDP-N-acetyl-3-O-(1-carboxyvinyl)-alpha-D-glucosamine + phosphate. The protein operates within cell wall biogenesis; peptidoglycan biosynthesis. Cell wall formation. Adds enolpyruvyl to UDP-N-acetylglucosamine. The sequence is that of UDP-N-acetylglucosamine 1-carboxyvinyltransferase from Acidithiobacillus ferrooxidans (strain ATCC 23270 / DSM 14882 / CIP 104768 / NCIMB 8455) (Ferrobacillus ferrooxidans (strain ATCC 23270)).